Consider the following 469-residue polypeptide: Exodeoxyribonuclease 7 large subunit (469 aa).

The protein belongs to the XseA family. As to quaternary structure, heterooligomer composed of large and small subunits.

The protein localises to the cytoplasm. It carries out the reaction Exonucleolytic cleavage in either 5'- to 3'- or 3'- to 5'-direction to yield nucleoside 5'-phosphates.. Bidirectionally degrades single-stranded DNA into large acid-insoluble oligonucleotides, which are then degraded further into small acid-soluble oligonucleotides. The sequence is that of Exodeoxyribonuclease 7 large subunit from Mycoplasma mycoides subsp. mycoides SC (strain CCUG 32753 / NCTC 10114 / PG1).